The following is a 266-amino-acid chain: Undecaprenyl-diphosphatase (266 aa).

7 helical membrane-spanning segments follow: residues 39-59 (PGAS…AYYF), 86-106 (SIFI…IFIP), 112-132 (VLRS…FMYL), 147-167 (NFSN…PGVS), 189-209 (FSFL…FVSS), 216-236 (LGFF…LLAI), and 246-266 (NGLK…LLNL).

It belongs to the UppP family.

The protein localises to the cell inner membrane. It carries out the reaction di-trans,octa-cis-undecaprenyl diphosphate + H2O = di-trans,octa-cis-undecaprenyl phosphate + phosphate + H(+). Its function is as follows. Catalyzes the dephosphorylation of undecaprenyl diphosphate (UPP). Confers resistance to bacitracin. In Prochlorococcus marinus (strain MIT 9301), this protein is Undecaprenyl-diphosphatase.